The sequence spans 231 residues: uncharacterized protein (231 aa).

The signal sequence occupies residues 1 to 17; that stretch reads MFGKILTTSLLIAMTFA. The tract at residues 197–231 is disordered; sequence KARKQQKNEGDDEETEDEQKIGSAIDGWVERQAKL.

This is an uncharacterized protein from Caenorhabditis elegans.